Here is a 145-residue protein sequence, read N- to C-terminus: 3-hydroxyacyl-[acyl-carrier-protein] dehydratase FabZ (145 aa).

Residue His47 is part of the active site.

The protein belongs to the thioester dehydratase family. FabZ subfamily.

It is found in the cytoplasm. It carries out the reaction a (3R)-hydroxyacyl-[ACP] = a (2E)-enoyl-[ACP] + H2O. Functionally, involved in unsaturated fatty acids biosynthesis. Catalyzes the dehydration of short chain beta-hydroxyacyl-ACPs and long chain saturated and unsaturated beta-hydroxyacyl-ACPs. The polypeptide is 3-hydroxyacyl-[acyl-carrier-protein] dehydratase FabZ (Polaromonas naphthalenivorans (strain CJ2)).